The sequence spans 411 residues: Putative ion-transport protein YfeO (411 aa).

11 helical membrane-spanning segments follow: residues 9 to 29, 54 to 74, 99 to 119, 149 to 169, 186 to 206, 223 to 243, 258 to 278, 296 to 316, 322 to 342, 343 to 363, and 386 to 406; these read MLLL…VLIA, DSPF…GLII, ALPG…SLGP, ILAS…AALI, LFAP…FFHP, IASG…AVWC, VLIL…GGPL, LGAG…VIAA, GGRI…LHAH, VEAV…VLVV, and LLCI…LLAA.

The protein belongs to the chloride channel (TC 2.A.49) family.

It is found in the cell membrane. In Salmonella choleraesuis (strain SC-B67), this protein is Putative ion-transport protein YfeO.